The primary structure comprises 399 residues: Elongation factor Tu (399 aa).

Residues 10–207 (KPHMNVGTIG…AMDTYFPDPV (198 aa)) form the tr-type G domain. The interval 19–26 (GQIDHGKT) is G1. GTP is bound at residue 19–26 (GQIDHGKT). A Mg(2+)-binding site is contributed by T26. The interval 60 to 64 (GITIN) is G2. Residues 81 to 84 (DCPG) are G3. Residues 81–85 (DCPGH) and 136–139 (NKVD) each bind GTP. The interval 136–139 (NKVD) is G4. The tract at residues 173–175 (SAL) is G5.

This sequence belongs to the TRAFAC class translation factor GTPase superfamily. Classic translation factor GTPase family. EF-Tu/EF-1A subfamily. Monomer.

It localises to the cytoplasm. It carries out the reaction GTP + H2O = GDP + phosphate + H(+). GTP hydrolase that promotes the GTP-dependent binding of aminoacyl-tRNA to the A-site of ribosomes during protein biosynthesis. In Fervidobacterium islandicum, this protein is Elongation factor Tu.